A 293-amino-acid polypeptide reads, in one-letter code: NAD kinase (293 aa).

Asp72 functions as the Proton acceptor in the catalytic mechanism. Residues Asp72 to Gly73, Asn146 to Asp147, Arg157, Arg174, Asp176, Thr187 to Ser192, and Gln247 contribute to the NAD(+) site.

This sequence belongs to the NAD kinase family. Requires a divalent metal cation as cofactor.

The protein resides in the cytoplasm. The enzyme catalyses NAD(+) + ATP = ADP + NADP(+) + H(+). Its function is as follows. Involved in the regulation of the intracellular balance of NAD and NADP, and is a key enzyme in the biosynthesis of NADP. Catalyzes specifically the phosphorylation on 2'-hydroxyl of the adenosine moiety of NAD to yield NADP. In Chromohalobacter salexigens (strain ATCC BAA-138 / DSM 3043 / CIP 106854 / NCIMB 13768 / 1H11), this protein is NAD kinase.